A 22-amino-acid chain; its full sequence is Brevinin-2LTa (22 aa).

In terms of tissue distribution, expressed by the skin glands.

The protein localises to the secreted. Its function is as follows. Has antibacterial activity. This Rana latastei (Italian agile frog) protein is Brevinin-2LTa.